Consider the following 593-residue polypeptide: Elongation factor 4 (593 aa).

Positions 2–181 (DKIRNFCIIA…AVIERIPHPQ (180 aa)) constitute a tr-type G domain. GTP-binding positions include 14 to 19 (DHGKST) and 128 to 131 (NKCD).

This sequence belongs to the TRAFAC class translation factor GTPase superfamily. Classic translation factor GTPase family. LepA subfamily.

The protein localises to the cell inner membrane. It carries out the reaction GTP + H2O = GDP + phosphate + H(+). In terms of biological role, required for accurate and efficient protein synthesis under certain stress conditions. May act as a fidelity factor of the translation reaction, by catalyzing a one-codon backward translocation of tRNAs on improperly translocated ribosomes. Back-translocation proceeds from a post-translocation (POST) complex to a pre-translocation (PRE) complex, thus giving elongation factor G a second chance to translocate the tRNAs correctly. Binds to ribosomes in a GTP-dependent manner. The polypeptide is Elongation factor 4 (Bacteroides fragilis (strain ATCC 25285 / DSM 2151 / CCUG 4856 / JCM 11019 / LMG 10263 / NCTC 9343 / Onslow / VPI 2553 / EN-2)).